A 635-amino-acid polypeptide reads, in one-letter code: Threonine--tRNA ligase (635 aa).

The 61-residue stretch at 1–61 (MINISFPDGS…DNDCRLRILT (61 aa)) folds into the TGS domain. Residues 242-533 (DHRKLGKELD…LIEEYAGRFP (292 aa)) are catalytic. Residues C333, H384, and H510 each contribute to the Zn(2+) site.

This sequence belongs to the class-II aminoacyl-tRNA synthetase family. As to quaternary structure, homodimer. Zn(2+) serves as cofactor.

It localises to the cytoplasm. It catalyses the reaction tRNA(Thr) + L-threonine + ATP = L-threonyl-tRNA(Thr) + AMP + diphosphate + H(+). In terms of biological role, catalyzes the attachment of threonine to tRNA(Thr) in a two-step reaction: L-threonine is first activated by ATP to form Thr-AMP and then transferred to the acceptor end of tRNA(Thr). Also edits incorrectly charged L-seryl-tRNA(Thr). The chain is Threonine--tRNA ligase from Rickettsia bellii (strain RML369-C).